The sequence spans 931 residues: Probable UDP-N-acetylglucosamine--peptide N-acetylglucosaminyltransferase SPINDLY (931 aa).

Positions 1–15 (MAWTEKDVENGKESE) are enriched in basic and acidic residues. The segment at 1 to 38 (MAWTEKDVENGKESESLGNNGFLKGGQSSSGSKGSPGR) is disordered. Positions 25–37 (GGQSSSGSKGSPG) are enriched in low complexity. TPR repeat units follow at residues 48–81 (DKDA…DSKS), 82–115 (IESL…DPQN), 116–149 (ACAL…DPSY), 157–190 (AIVL…DSHY), 191–224 (APAY…RPMY), 225–258 (AEAY…SPNF), 266–299 (AIAL…NWHY), 300–333 (ADAM…NPHC), 334–367 (AEAC…KPNF), 369–401 (QSLN…NPTY), and 402–435 (AEAY…DPDS). The interval 436–931 (RNAGQNRLLA…NHNGNHGNLS (496 aa)) is catalytic region. Positions 864-884 (QQQQTQTESVVPEESSVNPSE) are enriched in low complexity. Residues 864–931 (QQQQTQTESV…NHNGNHGNLS (68 aa)) form a disordered region. Residues 910–931 (KSSTSEENGVQSNHNGNHGNLS) are compositionally biased toward polar residues.

It belongs to the glycosyltransferase 41 family. O-GlcNAc transferase subfamily.

The protein localises to the nucleus. The enzyme catalyses L-seryl-[protein] + UDP-N-acetyl-alpha-D-glucosamine = 3-O-(N-acetyl-beta-D-glucosaminyl)-L-seryl-[protein] + UDP + H(+). It catalyses the reaction L-threonyl-[protein] + UDP-N-acetyl-alpha-D-glucosamine = 3-O-(N-acetyl-beta-D-glucosaminyl)-L-threonyl-[protein] + UDP + H(+). It functions in the pathway protein modification; protein glycosylation. Its function is as follows. Probable O-linked N-acetylglucosamine transferase (OGT) involved in various processes such as gibberellin (GA) signaling pathway. OGTs catalyze the addition of nucleotide-activated sugars directly onto the polypeptide through O-glycosidic linkage with the hydroxyl of serine or threonine. Probably acts by adding O-linked sugars to yet unknown proteins. This is Probable UDP-N-acetylglucosamine--peptide N-acetylglucosaminyltransferase SPINDLY (SPY) from Solanum lycopersicum (Tomato).